Consider the following 241-residue polypeptide: Probable 2-phosphosulfolactate phosphatase (241 aa).

It belongs to the ComB family. Requires Mg(2+) as cofactor.

It carries out the reaction (2R)-O-phospho-3-sulfolactate + H2O = (2R)-3-sulfolactate + phosphate. This Microcystis aeruginosa (strain NIES-843 / IAM M-2473) protein is Probable 2-phosphosulfolactate phosphatase.